A 293-amino-acid polypeptide reads, in one-letter code: Probable porphobilinogen deaminase (293 aa).

An S-(dipyrrolylmethanemethyl)cysteine modification is found at Cys-233.

Belongs to the HMBS family. Dipyrromethane serves as cofactor.

The catalysed reaction is 4 porphobilinogen + H2O = hydroxymethylbilane + 4 NH4(+). Its pathway is porphyrin-containing compound metabolism; protoporphyrin-IX biosynthesis; coproporphyrinogen-III from 5-aminolevulinate: step 2/4. Tetrapolymerization of the monopyrrole PBG into the hydroxymethylbilane pre-uroporphyrinogen in several discrete steps. This Saccharolobus islandicus (strain M.16.27) (Sulfolobus islandicus) protein is Probable porphobilinogen deaminase.